A 100-amino-acid polypeptide reads, in one-letter code: Urease subunit gamma (100 aa).

The protein belongs to the urease gamma subunit family. As to quaternary structure, heterotrimer of UreA (gamma), UreB (beta) and UreC (alpha) subunits. Three heterotrimers associate to form the active enzyme.

The protein resides in the cytoplasm. It catalyses the reaction urea + 2 H2O + H(+) = hydrogencarbonate + 2 NH4(+). Its pathway is nitrogen metabolism; urea degradation; CO(2) and NH(3) from urea (urease route): step 1/1. The polypeptide is Urease subunit gamma (Pseudomonas syringae pv. syringae (strain B728a)).